Reading from the N-terminus, the 275-residue chain is 2,3,4,5-tetrahydropyridine-2,6-dicarboxylate N-succinyltransferase (275 aa).

Residues arginine 104 and aspartate 141 each contribute to the substrate site.

Belongs to the transferase hexapeptide repeat family. As to quaternary structure, homotrimer.

The protein localises to the cytoplasm. It carries out the reaction (S)-2,3,4,5-tetrahydrodipicolinate + succinyl-CoA + H2O = (S)-2-succinylamino-6-oxoheptanedioate + CoA. It functions in the pathway amino-acid biosynthesis; L-lysine biosynthesis via DAP pathway; LL-2,6-diaminopimelate from (S)-tetrahydrodipicolinate (succinylase route): step 1/3. This chain is 2,3,4,5-tetrahydropyridine-2,6-dicarboxylate N-succinyltransferase, found in Aeromonas salmonicida (strain A449).